We begin with the raw amino-acid sequence, 200 residues long: Large ribosomal subunit protein uL4 (200 aa).

Residues Arg-43 to Gly-70 form a disordered region.

Belongs to the universal ribosomal protein uL4 family. In terms of assembly, part of the 50S ribosomal subunit.

Functionally, one of the primary rRNA binding proteins, this protein initially binds near the 5'-end of the 23S rRNA. It is important during the early stages of 50S assembly. It makes multiple contacts with different domains of the 23S rRNA in the assembled 50S subunit and ribosome. Forms part of the polypeptide exit tunnel. In Glaesserella parasuis serovar 5 (strain SH0165) (Haemophilus parasuis), this protein is Large ribosomal subunit protein uL4.